A 70-amino-acid chain; its full sequence is UPF0270 protein VIBHAR_00073 (70 aa).

Belongs to the UPF0270 family.

In Vibrio campbellii (strain ATCC BAA-1116), this protein is UPF0270 protein VIBHAR_00073.